A 411-amino-acid polypeptide reads, in one-letter code: MSVLYGIAAATVTATASFLLTAVLAALLRAPALRLAVVDRRRRRPVPLLGGVAVVLVTAVVAWAGDRAGVVPLGPAAGRLLAAATVVGALGLAADVWRLRRRWLLAGTAVAAACVVPYGETGPVAGALAVGWVALVTGAFRGLDHADGVVGTVGVVTAFGVGACAAVELMDGPAVLLLVLAAALAGFLLHNWHPARIALGACGSLFTGFLLTGAAVLARTGYGPVGGAGVLCALTAVPVADAVLVLLSRRLAGRPLSRGGPDHLAHRLRRLGLTAQGVVVVLGGAALCAVVVGVLAHTGRVGGQAALWVAGGAAAGVLGLLRVRVYGPARLRRGAGVRAPVRRAGRGARAWAVVRRPRTAMRRARAGVSQAPRGATGAAGGASFRAAIFPVRQATSTENVQVGAPLRVRNG.

10 consecutive transmembrane segments (helical) span residues 7-27 (IAAA…LAAL), 45-65 (PVPL…AWAG), 70-90 (VVPL…VGAL), 120-140 (ETGP…TGAF), 148-168 (GVVG…AAVE), 169-189 (LMDG…GFLL), 197-217 (IALG…AAVL), 227-247 (GAGV…LVLL), 277-297 (GVVV…VLAH), and 301-321 (VGGQ…LGLL).

The protein belongs to the glycosyltransferase 4 family.

Its subcellular location is the cell membrane. This is Putative glycosyltransferase SCO3672 from Streptomyces coelicolor (strain ATCC BAA-471 / A3(2) / M145).